Reading from the N-terminus, the 340-residue chain is S-adenosylmethionine:tRNA ribosyltransferase-isomerase (340 aa).

Belongs to the QueA family. In terms of assembly, monomer.

Its subcellular location is the cytoplasm. The catalysed reaction is 7-aminomethyl-7-carbaguanosine(34) in tRNA + S-adenosyl-L-methionine = epoxyqueuosine(34) in tRNA + adenine + L-methionine + 2 H(+). It participates in tRNA modification; tRNA-queuosine biosynthesis. In terms of biological role, transfers and isomerizes the ribose moiety from AdoMet to the 7-aminomethyl group of 7-deazaguanine (preQ1-tRNA) to give epoxyqueuosine (oQ-tRNA). The protein is S-adenosylmethionine:tRNA ribosyltransferase-isomerase of Chromobacterium violaceum (strain ATCC 12472 / DSM 30191 / JCM 1249 / CCUG 213 / NBRC 12614 / NCIMB 9131 / NCTC 9757 / MK).